We begin with the raw amino-acid sequence, 198 residues long: ATP synthase protein MI25 (198 aa).

The chain crosses the membrane as a helical span at residues 29-49 (ISIYNEEMIVALCFIGFIIFS).

This sequence belongs to the ATPase protein MI25 family. In terms of assembly, F-type ATPases have 2 components, CF(1) - the catalytic core - and CF(0) - the membrane proton channel. CF(1) has five subunits: alpha(3), beta(3), gamma(1), delta(1), epsilon(1). CF(0) has three main subunits: a, b and c.

It localises to the mitochondrion membrane. Its function is as follows. This is one of the chains of the nonenzymatic component (CF(0) subunit) of the mitochondrial ATPase complex. The chain is ATP synthase protein MI25 from Nicotiana tabacum (Common tobacco).